The following is a 148-amino-acid chain: Large ribosomal subunit protein bL9 (148 aa).

Belongs to the bacterial ribosomal protein bL9 family.

Binds to the 23S rRNA. This chain is Large ribosomal subunit protein bL9, found in Staphylococcus saprophyticus subsp. saprophyticus (strain ATCC 15305 / DSM 20229 / NCIMB 8711 / NCTC 7292 / S-41).